The sequence spans 336 residues: Dihydroorotate dehydrogenase (quinone) (336 aa).

FMN is bound by residues 62–66 and Thr-86; that span reads AGLDK. Residue Lys-66 participates in substrate binding. A substrate-binding site is contributed by 111–115; the sequence is NRMGF. The FMN site is built by Asn-139 and Asn-172. Asn-172 lines the substrate pocket. Ser-175 (nucleophile) is an active-site residue. Asn-177 contributes to the substrate binding site. FMN contacts are provided by Lys-217 and Thr-245. Residue 246–247 participates in substrate binding; it reads NT. FMN contacts are provided by residues Gly-268, Gly-297, and 318 to 319; that span reads YS.

Belongs to the dihydroorotate dehydrogenase family. Type 2 subfamily. In terms of assembly, monomer. FMN is required as a cofactor.

It is found in the cell membrane. It catalyses the reaction (S)-dihydroorotate + a quinone = orotate + a quinol. The protein operates within pyrimidine metabolism; UMP biosynthesis via de novo pathway; orotate from (S)-dihydroorotate (quinone route): step 1/1. Functionally, catalyzes the conversion of dihydroorotate to orotate with quinone as electron acceptor. This Yersinia pseudotuberculosis serotype O:1b (strain IP 31758) protein is Dihydroorotate dehydrogenase (quinone).